The chain runs to 36 residues: Photosystem I reaction center subunit VIII (36 aa).

The helical transmembrane segment at 6–26 (LPSIFVPLVGLVFPAIAMASL) threads the bilayer.

Belongs to the PsaI family.

Its subcellular location is the plastid. It is found in the chloroplast thylakoid membrane. Its function is as follows. May help in the organization of the PsaL subunit. The chain is Photosystem I reaction center subunit VIII from Liriodendron tulipifera (Tuliptree).